Reading from the N-terminus, the 683-residue chain is Translation initiation factor IF-2 (683 aa).

Positions 182-351 constitute a tr-type G domain; it reads KRPPVVTVMG…ILTAEMEELK (170 aa). The segment at 191 to 198 is G1; it reads GHVDHGKT. Residue 191–198 participates in GTP binding; sequence GHVDHGKT. The interval 216 to 220 is G2; that stretch reads GITQH. The segment at 237-240 is G3; that stretch reads DTPG. Residues 237–241 and 291–294 contribute to the GTP site; these read DTPGH and NKID. The G4 stretch occupies residues 291-294; it reads NKID. Positions 327-329 are G5; it reads SAH.

This sequence belongs to the TRAFAC class translation factor GTPase superfamily. Classic translation factor GTPase family. IF-2 subfamily.

The protein resides in the cytoplasm. Functionally, one of the essential components for the initiation of protein synthesis. Protects formylmethionyl-tRNA from spontaneous hydrolysis and promotes its binding to the 30S ribosomal subunits. Also involved in the hydrolysis of GTP during the formation of the 70S ribosomal complex. In Clostridium novyi (strain NT), this protein is Translation initiation factor IF-2.